A 621-amino-acid polypeptide reads, in one-letter code: Putative DNA 3'-5' helicase Rad25 (621 aa).

Residues 268 to 417 (VERFTEQGSG…EIFTLIGPPI (150 aa)) form the Helicase ATP-binding domain. Residue 281–288 (GPPGSGKT) coordinates ATP. A DEAH box motif is present at residues 371–374 (DEVH). The tract at residues 441–465 (PWGDETEQSEYSSTSGHDRRQAAAS) is disordered. The region spanning 469 to 621 (KIDEIRYALA…EAVEPPAKTE (153 aa)) is the Helicase C-terminal domain.

Belongs to the helicase family. RAD25/XPB subfamily.

The enzyme catalyses Couples ATP hydrolysis with the unwinding of duplex DNA by translocating in the 3'-5' direction.. The catalysed reaction is ATP + H2O = ADP + phosphate + H(+). The sequence is that of Putative DNA 3'-5' helicase Rad25 from Haloarcula marismortui (strain ATCC 43049 / DSM 3752 / JCM 8966 / VKM B-1809) (Halobacterium marismortui).